A 431-amino-acid polypeptide reads, in one-letter code: Glutamate-1-semialdehyde 2,1-aminomutase (431 aa).

Residue lysine 265 is modified to N6-(pyridoxal phosphate)lysine.

It belongs to the class-III pyridoxal-phosphate-dependent aminotransferase family. HemL subfamily. In terms of assembly, homodimer. Pyridoxal 5'-phosphate is required as a cofactor.

Its subcellular location is the cytoplasm. The enzyme catalyses (S)-4-amino-5-oxopentanoate = 5-aminolevulinate. The protein operates within porphyrin-containing compound metabolism; protoporphyrin-IX biosynthesis; 5-aminolevulinate from L-glutamyl-tRNA(Glu): step 2/2. In Vibrio atlanticus (strain LGP32) (Vibrio splendidus (strain Mel32)), this protein is Glutamate-1-semialdehyde 2,1-aminomutase.